The sequence spans 473 residues: Chromosomal replication initiator protein DnaA (473 aa).

The tract at residues Met-1–Val-87 is domain I, interacts with DnaA modulators. Residues Val-87–Thr-132 form a domain II region. A domain III, AAA+ region region spans residues Arg-133–Ala-349. Positions 177, 179, 180, and 181 each coordinate ATP. Residues Ser-350–Arg-473 form a domain IV, binds dsDNA region.

This sequence belongs to the DnaA family. As to quaternary structure, oligomerizes as a right-handed, spiral filament on DNA at oriC.

The protein localises to the cytoplasm. Plays an essential role in the initiation and regulation of chromosomal replication. ATP-DnaA binds to the origin of replication (oriC) to initiate formation of the DNA replication initiation complex once per cell cycle. Binds the DnaA box (a 9 base pair repeat at the origin) and separates the double-stranded (ds)DNA. Forms a right-handed helical filament on oriC DNA; dsDNA binds to the exterior of the filament while single-stranded (ss)DNA is stabiized in the filament's interior. The ATP-DnaA-oriC complex binds and stabilizes one strand of the AT-rich DNA unwinding element (DUE), permitting loading of DNA polymerase. After initiation quickly degrades to an ADP-DnaA complex that is not apt for DNA replication. Binds acidic phospholipids. The protein is Chromosomal replication initiator protein DnaA of Leifsonia xyli subsp. xyli (strain CTCB07).